The following is a 211-amino-acid chain: Guanylate kinase (211 aa).

In terms of domain architecture, Guanylate kinase-like spans 5-184 (GLLIVFSGPS…AAERVKRIIE (180 aa)). 12–19 (GPSGVGKG) is an ATP binding site.

Belongs to the guanylate kinase family.

The protein resides in the cytoplasm. It carries out the reaction GMP + ATP = GDP + ADP. Its function is as follows. Essential for recycling GMP and indirectly, cGMP. In Streptococcus pyogenes serotype M3 (strain SSI-1), this protein is Guanylate kinase.